We begin with the raw amino-acid sequence, 400 residues long: ATP phosphoribosyltransferase regulatory subunit (400 aa).

The protein belongs to the class-II aminoacyl-tRNA synthetase family. HisZ subfamily. Heteromultimer composed of HisG and HisZ subunits.

It is found in the cytoplasm. It functions in the pathway amino-acid biosynthesis; L-histidine biosynthesis; L-histidine from 5-phospho-alpha-D-ribose 1-diphosphate: step 1/9. Required for the first step of histidine biosynthesis. May allow the feedback regulation of ATP phosphoribosyltransferase activity by histidine. The polypeptide is ATP phosphoribosyltransferase regulatory subunit (Hahella chejuensis (strain KCTC 2396)).